The sequence spans 295 residues: Ribosomal protein L11 methyltransferase (295 aa).

S-adenosyl-L-methionine is bound by residues threonine 145, glycine 166, aspartate 188, and asparagine 230.

Belongs to the methyltransferase superfamily. PrmA family.

The protein localises to the cytoplasm. The catalysed reaction is L-lysyl-[protein] + 3 S-adenosyl-L-methionine = N(6),N(6),N(6)-trimethyl-L-lysyl-[protein] + 3 S-adenosyl-L-homocysteine + 3 H(+). Methylates ribosomal protein L11. The sequence is that of Ribosomal protein L11 methyltransferase from Shewanella amazonensis (strain ATCC BAA-1098 / SB2B).